The sequence spans 492 residues: Probable cytochrome P450 313a3 (492 aa).

Cys438 is a binding site for heme.

It belongs to the cytochrome P450 family. Requires heme as cofactor.

The protein resides in the endoplasmic reticulum membrane. It localises to the microsome membrane. May be involved in the metabolism of insect hormones and in the breakdown of synthetic insecticides. This is Probable cytochrome P450 313a3 (Cyp313a3) from Drosophila melanogaster (Fruit fly).